The chain runs to 471 residues: tRNA-2-methylthio-N(6)-dimethylallyladenosine synthase (471 aa).

Positions 29–146 (KKFHIKTYGC…LPELIAKVNR (118 aa)) constitute an MTTase N-terminal domain. [4Fe-4S] cluster is bound by residues Cys-38, Cys-74, Cys-109, Cys-187, Cys-191, and Cys-194. Residues 173–405 (RVPQSSAFLS…QQLLKEKQLE (233 aa)) enclose the Radical SAM core domain. In terms of domain architecture, TRAM spans 408 to 467 (KKMIGKTVTVLFDKKHPDKISGRTEYMQQVFSDDSNLLDKIVTMRVEDASTFTLKCTAED).

It belongs to the methylthiotransferase family. MiaB subfamily. As to quaternary structure, monomer. The cofactor is [4Fe-4S] cluster.

It is found in the cytoplasm. It carries out the reaction N(6)-dimethylallyladenosine(37) in tRNA + (sulfur carrier)-SH + AH2 + 2 S-adenosyl-L-methionine = 2-methylsulfanyl-N(6)-dimethylallyladenosine(37) in tRNA + (sulfur carrier)-H + 5'-deoxyadenosine + L-methionine + A + S-adenosyl-L-homocysteine + 2 H(+). In terms of biological role, catalyzes the methylthiolation of N6-(dimethylallyl)adenosine (i(6)A), leading to the formation of 2-methylthio-N6-(dimethylallyl)adenosine (ms(2)i(6)A) at position 37 in tRNAs that read codons beginning with uridine. The protein is tRNA-2-methylthio-N(6)-dimethylallyladenosine synthase of Neorickettsia sennetsu (strain ATCC VR-367 / Miyayama) (Ehrlichia sennetsu).